The chain runs to 180 residues: Large ribosomal subunit protein uL5 (180 aa).

It belongs to the universal ribosomal protein uL5 family. As to quaternary structure, part of the 50S ribosomal subunit; part of the 5S rRNA/L5/L18/L25 subcomplex. Contacts the 5S rRNA and the P site tRNA. Forms a bridge to the 30S subunit in the 70S ribosome.

In terms of biological role, this is one of the proteins that bind and probably mediate the attachment of the 5S RNA into the large ribosomal subunit, where it forms part of the central protuberance. In the 70S ribosome it contacts protein S13 of the 30S subunit (bridge B1b), connecting the 2 subunits; this bridge is implicated in subunit movement. Contacts the P site tRNA; the 5S rRNA and some of its associated proteins might help stabilize positioning of ribosome-bound tRNAs. The protein is Large ribosomal subunit protein uL5 of Ralstonia pickettii (strain 12J).